The chain runs to 329 residues: 2-oxoglutarate-dependent dioxygenase htyE (329 aa).

In terms of domain architecture, Fe2OG dioxygenase spans 175 to 289 (NTSELRLLHY…RYSVAYFGKP (115 aa)). Residues histidine 201, aspartate 203, and histidine 261 each contribute to the Fe cation site. Arginine 280 contributes to the 2-oxoglutarate binding site.

It belongs to the iron/ascorbate-dependent oxidoreductase family. Requires Fe(2+) as cofactor.

It participates in antifungal biosynthesis. Its function is as follows. 2-oxoglutarate-dependent dioxygenase; part of the gene cluster that mediates the de novo generation of L-homotyrosine from acetyl-CoA and 4-hydroxyphenyl-pyruvate. L-homotyrosine is a building block of echinocandin B, a fungal lipidated cyclic hexapeptide that acts as an antifungal agent. L-homotyrosine 4-hydroxyphenyl-pyruvate first undergoes an aldol-type condensation by htyA with the C-2 of acetyl-CoA followed by the release of CoA to form 2-(4-hydroxybenzyl)-malate. This is followed by isomerization of 2-(4-hydroxy-benzyl)-malate to 3-(4-hydroxybenzyl)-malate by htyD. Thereafter, 3-(4-hydroxybenzyl)-malate undergoes decarboxylation and oxidation to form 2-oxo-4-(4-hydroxybenzyl)butanoic acid, coupled to reduction of NAD(+) to NADH by htyC. The product then undergoes transamination catalyzed by htyB to form L-homotyrosine. The protein is 2-oxoglutarate-dependent dioxygenase htyE of Aspergillus rugulosus (Emericella rugulosa).